Reading from the N-terminus, the 264-residue chain is Thymidylate synthase (264 aa).

DUMP is bound at residue Arg21. (6R)-5,10-methylene-5,6,7,8-tetrahydrofolate is bound at residue His51. 126–127 is a dUMP binding site; the sequence is RR. Cys146 (nucleophile) is an active-site residue. DUMP is bound by residues 166-169, Asn177, and 207-209; these read RSGD and HLY. Asp169 lines the (6R)-5,10-methylene-5,6,7,8-tetrahydrofolate pocket. Residue Ala263 participates in (6R)-5,10-methylene-5,6,7,8-tetrahydrofolate binding.

The protein belongs to the thymidylate synthase family. Bacterial-type ThyA subfamily. As to quaternary structure, homodimer.

The protein resides in the cytoplasm. The enzyme catalyses dUMP + (6R)-5,10-methylene-5,6,7,8-tetrahydrofolate = 7,8-dihydrofolate + dTMP. The protein operates within pyrimidine metabolism; dTTP biosynthesis. Functionally, catalyzes the reductive methylation of 2'-deoxyuridine-5'-monophosphate (dUMP) to 2'-deoxythymidine-5'-monophosphate (dTMP) while utilizing 5,10-methylenetetrahydrofolate (mTHF) as the methyl donor and reductant in the reaction, yielding dihydrofolate (DHF) as a by-product. This enzymatic reaction provides an intracellular de novo source of dTMP, an essential precursor for DNA biosynthesis. The polypeptide is Thymidylate synthase (Xanthomonas axonopodis pv. citri (strain 306)).